The sequence spans 583 residues: Aspartate--tRNA(Asp/Asn) ligase (583 aa).

E173 serves as a coordination point for L-aspartate. The aspartate stretch occupies residues 197-200 (QMFK). R219 contributes to the L-aspartate binding site. Residues 219 to 221 (RDE) and Q228 each bind ATP. H447 is a binding site for L-aspartate. E481 lines the ATP pocket. Position 488 (R488) interacts with L-aspartate. 533-536 (GLDR) is a binding site for ATP.

It belongs to the class-II aminoacyl-tRNA synthetase family. Type 1 subfamily. Homodimer.

The protein resides in the cytoplasm. The enzyme catalyses tRNA(Asx) + L-aspartate + ATP = L-aspartyl-tRNA(Asx) + AMP + diphosphate. Functionally, aspartyl-tRNA synthetase with relaxed tRNA specificity since it is able to aspartylate not only its cognate tRNA(Asp) but also tRNA(Asn). Reaction proceeds in two steps: L-aspartate is first activated by ATP to form Asp-AMP and then transferred to the acceptor end of tRNA(Asp/Asn). In Elusimicrobium minutum (strain Pei191), this protein is Aspartate--tRNA(Asp/Asn) ligase.